The chain runs to 468 residues: Secretogranin-3 (468 aa).

The N-terminal stretch at 1-19 (MGFLGTGTWILVLVLPIQA) is a signal peptide. The disordered stretch occupies residues 23-69 (PGGSQDKSLHNRELSAERPLNEQIAEAEEDKIKKTYPPENKPGQSNY). The segment covering 29–42 (KSLHNRELSAERPL) has biased composition (basic and acidic residues). Ser-37 is subject to Phosphoserine. An O-linked (Xyl...) (chondroitin sulfate) serine glycan is attached at Ser-37. Residues Thr-216 and Thr-231 are each glycosylated (O-linked (GalNAc...) threonine). The interval 353–406 (KLFPAPSEKSHEETDSTKEEAAKMEKEYGSLKDSTKDDNSNPGGKTDEPKGKTE) is disordered. The O-linked (GalNAc...) serine glycan is linked to Ser-359. A compositionally biased stretch (basic and acidic residues) spans 360-406 (EKSHEETDSTKEEAAKMEKEYGSLKDSTKDDNSNPGGKTDEPKGKTE). Ser-362 bears the Phosphoserine mark.

In terms of assembly, interacts with CHGA. Interacts with secretogranin II/SCG2. Interacts (via C-terminus) with CPE. Post-translationally, O-glycosylated. In terms of tissue distribution, detected in urine (at protein level). Expressed in brain, heart, kidney, liver and skeletal muscle.

The protein resides in the cytoplasmic vesicle. It localises to the secretory vesicle. Its subcellular location is the secretory vesicle membrane. It is found in the secreted. In terms of biological role, member of the granin protein family that regulates the biogenesis of secretory granules. Acts as a sorting receptor for intragranular proteins including chromogranin A/CHGA. May also play a role in angiogenesis. Promotes endothelial proliferation, migration and tube formation through MEK/ERK signaling pathway. The chain is Secretogranin-3 (SCG3) from Homo sapiens (Human).